The following is a 252-amino-acid chain: Lipoprotein PrgK (252 aa).

Positions 1 to 17 (MIRRYLYTFLLVMTLAG) are cleaved as a signal peptide. Cys-18 is lipidated: N-palmitoyl cysteine. A lipid anchor (S-diacylglycerol cysteine) is attached at Cys-18. The helical transmembrane segment at 207–227 (FATSWIVLIILLSVMSAGFGV) threads the bilayer.

Belongs to the YscJ lipoprotein family.

It is found in the cell outer membrane. In terms of biological role, required for invasion of epithelial cells. Could be involved in protein secretion. The chain is Lipoprotein PrgK (prgK) from Salmonella typhimurium (strain LT2 / SGSC1412 / ATCC 700720).